Here is a 129-residue protein sequence, read N- to C-terminus: uncharacterized protein (129 aa).

It belongs to the asfivirus C129R family.

The protein localises to the virion. In terms of biological role, plays a role in the inhibition of type I interferon signaling pathway. Mechanistically, specifically interacts with 2',3'-cGAMP and cleaves it via its phosphodiesterase activity. In turn, prevents 2',3'-cGAMP interaction with host ER-resident STING1 leading to inhibition of downstream signaling pathway and type I interferon production. This is an uncharacterized protein from Ornithodoros (relapsing fever ticks).